We begin with the raw amino-acid sequence, 27 residues long: uncharacterized protein (27 aa).

The protein resides in the plastid. The protein localises to the cyanelle. This is an uncharacterized protein from Cyanophora paradoxa.